The chain runs to 78 residues: UPF0349 protein BH3414 (78 aa).

It belongs to the UPF0349 family.

This is UPF0349 protein BH3414 from Halalkalibacterium halodurans (strain ATCC BAA-125 / DSM 18197 / FERM 7344 / JCM 9153 / C-125) (Bacillus halodurans).